A 290-amino-acid polypeptide reads, in one-letter code: ATP synthase gamma chain (290 aa).

The protein belongs to the ATPase gamma chain family. In terms of assembly, F-type ATPases have 2 components, CF(1) - the catalytic core - and CF(0) - the membrane proton channel. CF(1) has five subunits: alpha(3), beta(3), gamma(1), delta(1), epsilon(1). CF(0) has three main subunits: a, b and c.

The protein resides in the cell membrane. Its function is as follows. Produces ATP from ADP in the presence of a proton gradient across the membrane. The gamma chain is believed to be important in regulating ATPase activity and the flow of protons through the CF(0) complex. The polypeptide is ATP synthase gamma chain (Buchnera aphidicola subsp. Schlechtendalia chinensis).